The primary structure comprises 330 residues: Serine/threonine-protein phosphatase PP1-alpha catalytic subunit (330 aa).

S2 is modified (N-acetylserine). 2 positions are modified to phosphoserine: S2 and S22. The Mn(2+) site is built by D64, H66, D92, and N124. The Proton donor role is filled by H125. Positions 173 and 248 each coordinate Mn(2+). K305 carries the N6-acetyllysine modification. The residue at position 306 (Y306) is a Phosphotyrosine. Positions 306 to 330 (YGQFSGLNPGGRPITPPRNSAKAKK) are disordered. A Phosphothreonine modification is found at T320. A Phosphoserine modification is found at S325.

It belongs to the PPP phosphatase family. PP-1 subfamily. As to quaternary structure, PP1 comprises a catalytic subunit, PPP1CA, PPP1CB or PPP1CC, which is folded into its native form by inhibitor 2 and glycogen synthetase kinase 3, and then complexed to one or several targeting or regulatory subunits. PPP1R12A, PPP1R12B and PPP1R12C mediate binding to myosin. PPP1R3A (in skeletal muscle), PPP1R3B (in liver), PPP1R3C, PPP1R3D and PPP1R3F (in brain) mediate binding to glycogen. Interacts with PPP1R39. Interacts with BTBD10. Interacts with KCTD20. Interacts with PPP1R9A and PPP1R9B. Part of a complex containing PPP1R15B, PP1 and NCK1/2. Interacts with PHACTR4; which acts as an activator of PP1 activity. Interacts with PPP1R15A and PPP1R15B; the interactions mediate binding to EIF2S1. Interacts with PPP1R7. Interacts with YLPM1. Forms a complex with ILF2, ILF3, YLPM1, KHDRBS1, RBMX and NCOA5. Interacts with NOM1 and PPP1R8. Interacts with PPP1R16B. Interacts with RPSA only in the presence of PPP1R16B. Component of the PNUTS-PP1 phosphatase complex, composed of PPP1R10/PNUTS, TOX4, WDR82, and PPP1CA or PPP1CB or PPP1CC. Interacts with PPP1R10/PNUTS and PPP1R8. Interacts with WDR82 in the presence of PPP1R10/PNUTS. Interacts with TRIM28; the interaction dephosphorylates TRIM28 on 'Ser-824' and forms a complex at the p21 promoter site. Interacts with isoform 1 and isoform 4 of NEK2. Interacts with FER; this promotes phosphorylation at Thr-320. Interacts with DAB2; the interaction is mutually exclusive with the AXIN1:PPP1CA interaction. Interacts with FOXP3. Interacts with CENPA. Interacts with ATG16L1. Found in a complex with PPP1CA, PPP1CC, SHC1 and PEAK1. Interacts with tensin TNS1. Interacts with SAXO4, PPP1R21, PPP1R26, PPP1R27, PPP1R35, PPP1R36, PPP1R37, SH3RF2, ELFN1 and ELFN2. Interacts with TPRN; the interaction results in inhibition of PPC1A phosphatase activity. Interacts with SKA1 (via C-terminus); the interaction is direct and required for the recruitment of PP1 to the kinetochore. Interacts with the KNL1 complex subunit KNL1; the interaction is direct and mutually exclusive with KNL1 binding to microtubules. Component of the SHOC2-MRAS-PP1c (SMP) complex consisting of SHOC2, GTP-bound M-Ras/MRAS and the catalytic subunit of protein phosphatase 1 (either PPP1CA, PPP1CB or PPP1CC). SHOC2 and PP1c preferably bind M-Ras/MRAS, but they also bind K-Ras/KRAS, N-Ras/NRAS and H-Ras/HRAS; these interactions are GTP-dependent and both SHOC2 and PP1c are required to form a stable complex. Interacts with SHOC2 in the absence of Ras GTPases. In terms of assembly, (Microbial infection) Interacts with HHV-1 ICP34.5. (Microbial infection) Interacts with Venezuelan equine encephalitis virus (VEEV) capsid protein; this interaction dephosphorylates the capsid protein, which increases its ability to bind to the viral genome. It depends on Fe cation as a cofactor. The cofactor is Mn(2+). Post-translationally, phosphorylated. Dephosphorylated at Thr-320 in the presence of ionizing radiation.

Its subcellular location is the cytoplasm. It is found in the nucleus. The protein localises to the nucleoplasm. It localises to the nucleolus. It carries out the reaction O-phospho-L-seryl-[protein] + H2O = L-seryl-[protein] + phosphate. The catalysed reaction is O-phospho-L-threonyl-[protein] + H2O = L-threonyl-[protein] + phosphate. The phosphatase activity of the PPP1R15A-PP1 complex toward EIF2S1 is specifically inhibited by Salubrinal, a drug that protects cells from endoplasmic reticulum stress. Protein phosphatase that associates with over 200 regulatory proteins to form highly specific holoenzymes which dephosphorylate hundreds of biological targets. Protein phosphatase 1 (PP1) is essential for cell division, transcription elongation, and participates in the regulation of glycogen metabolism, muscle contractility and protein synthesis. Involved in regulation of ionic conductances and long-term synaptic plasticity. May play an important role in dephosphorylating substrates such as the postsynaptic density-associated Ca(2+)/calmodulin dependent protein kinase II. Catalytic component of the PNUTS-PP1 protein phosphatase complex, a protein phosphatase 1 (PP1) complex that promotes RNA polymerase II transcription pause-release, allowing transcription elongation: the PNUTS-PP1 complex mediates the release of RNA polymerase II from promoter-proximal region of genes by catalyzing dephosphorylation of proteins involved in transcription, such as AFF4, CDK9, MEPCE, INTS12, NCBP1, POLR2M/GDOWN1 and SUPT6H. The PNUTS-PP1 complex also regulates transcription termination by mediating dephosphorylation of SUPT5H in termination zones downstream of poly(A) sites, thereby promoting deceleration of RNA polymerase II transcription. PNUTS-PP1 complex is also involved in the response to replication stress by mediating dephosphorylation of POLR2A at 'Ser-5' of the CTD, promoting RNA polymerase II degradation. PNUTS-PP1 also plays a role in the control of chromatin structure and cell cycle progression during the transition from mitosis into interphase. Regulates NEK2 function in terms of kinase activity and centrosome number and splitting, both in the presence and absence of radiation-induced DNA damage. Regulator of neural tube and optic fissure closure, and enteric neural crest cell (ENCCs) migration during development. In balance with CSNK1D and CSNK1E, determines the circadian period length, through the regulation of the speed and rhythmicity of PER1 and PER2 phosphorylation. May dephosphorylate CSNK1D and CSNK1E. Dephosphorylates the 'Ser-418' residue of FOXP3 in regulatory T-cells (Treg) from patients with rheumatoid arthritis, thereby inactivating FOXP3 and rendering Treg cells functionally defective. Dephosphorylates CENPA. Dephosphorylates the 'Ser-139' residue of ATG16L1 causing dissociation of ATG12-ATG5-ATG16L1 complex, thereby inhibiting autophagy. Together with PPP1CC (PP1-gamma subunit), dephosphorylates IFIH1/MDA5 and RIG-I leading to their activation and a functional innate immune response. Core component of the SHOC2-MRAS-PP1c (SMP) holophosphatase complex that regulates the MAPK pathway activation. The SMP complex specifically dephosphorylates the inhibitory phosphorylation at 'Ser-259' of RAF1 kinase, 'Ser-365' of BRAF kinase and 'Ser-214' of ARAF kinase, stimulating their kinase activities. The SMP complex enhances the dephosphorylation activity and substrate specificity of PP1c. Functionally, (Microbial infection) Necessary for alphaviruses replication. This chain is Serine/threonine-protein phosphatase PP1-alpha catalytic subunit (PPP1CA), found in Homo sapiens (Human).